We begin with the raw amino-acid sequence, 242 residues long: MSTNPKPAFRRILLKLSGEALMGDEGFGIDPKVLDRMAQEVKELVELGIQVGVVIGGGNLFRGEGLAKAGMNRVVGDHMGMLATVMNGLAMRDALHRAYVNARLMSAIPLKGVCDDYNWAEAISLLKSGRVVIFAAGTGNPFCTTDSAACLRGIEIEAEVVLKGTKVDGVYSDDPMKNPEAVKYDELSYTEVLDKELKVMDLAAFTMARDHDMPILVFNMNKPGALRRVVMGEEEGTLIKAK.

Residue 15–18 (KLSG) coordinates ATP. Positions 23-28 (GDEGFG) are involved in allosteric activation by GTP. Position 57 (Gly-57) interacts with UMP. Residues Gly-58 and Arg-62 each contribute to the ATP site. Residues Asp-77 and 138–145 (TGNPFCTT) contribute to the UMP site. Thr-165, Tyr-171, and Asp-174 together coordinate ATP.

It belongs to the UMP kinase family. Homohexamer.

Its subcellular location is the cytoplasm. The enzyme catalyses UMP + ATP = UDP + ADP. The protein operates within pyrimidine metabolism; CTP biosynthesis via de novo pathway; UDP from UMP (UMPK route): step 1/1. Its activity is regulated as follows. Allosterically activated by GTP. Inhibited by UTP. In terms of biological role, catalyzes the reversible phosphorylation of UMP to UDP. In Shewanella sp. (strain ANA-3), this protein is Uridylate kinase.